The following is a 1544-amino-acid chain: Arf-GAP with Rho-GAP domain, ANK repeat and PH domain-containing protein 3 (1544 aa).

The SAM domain occupies 4–68 (PQDLDIAVWL…LRLLQTGTEE (65 aa)). 2 disordered regions span residues 64-147 (TGTE…EQSS) and 167-194 (GRAQ…PTTG). 2 stretches are compositionally biased toward pro residues: residues 82-97 (SPSP…PVPK) and 130-139 (EPSPRPPPLP). 2 consecutive PH domains span residues 287 to 379 (TPLL…SCLK) and 394 to 483 (RPLR…EAVT). The 132-residue stretch at 480-611 (EAVTETLSDY…LFRKPHPQYP (132 aa)) folds into the Arf-GAP domain. The C4-type zinc-finger motif lies at 504–527 (CADCGSSRPDWAAVNLGVVICKQC). One can recognise a Rho-GAP domain in the interval 907-1088 (TGLQEQQMSR…ELIDGYISVF (182 aa)). The Ras-associating domain occupies 1117 to 1210 (GDLIMEVYIE…ASLLLKKVPL (94 aa)). Residues 1223 to 1325 (ESPRVGLLRC…WTTSILKAQH (103 aa)) enclose the PH 3 domain. Phosphothreonine is present on Thr1348. Phosphotyrosine is present on residues Tyr1403 and Tyr1408. The segment at 1422 to 1544 (STSFSTTREW…SSPPSSQPLT (123 aa)) is disordered. The segment covering 1438–1457 (PLTSQKSLDQPFLSKSSTLG) has biased composition (polar residues). Residues Ser1444 and Ser1480 each carry the phosphoserine modification. 2 stretches are compositionally biased toward low complexity: residues 1482 to 1492 (EEQLLQELSSL) and 1502 to 1527 (GLGS…TPGF).

As to quaternary structure, interacts (via SAM domain) with INPPL1/SHIP2. Tyrosine phosphorylated at a low basal level. PDGF treatment stimulates phosphorylation. Tyrosine phosphorylation is increased in cells that are in the process of becoming attached to a substrate and that start spreading and flattening.

It localises to the cytoplasm. The protein localises to the cytoskeleton. It is found in the cell membrane. Its subcellular location is the cell projection. The protein resides in the lamellipodium. It localises to the ruffle. Its function is as follows. Phosphatidylinositol 3,4,5-trisphosphate-dependent GTPase-activating protein that modulates actin cytoskeleton remodeling by regulating ARF and RHO family members. Is activated by phosphatidylinositol 3,4,5-trisphosphate (PtdIns(3,4,5)P3) binding. Can be activated by phosphatidylinositol 3,4-bisphosphate (PtdIns(3,4,5)P2) binding, albeit with lower efficiency. Acts on ARF6, RAC1, RHOA and CDC42. Plays a role in the internalization of anthrax toxin. The polypeptide is Arf-GAP with Rho-GAP domain, ANK repeat and PH domain-containing protein 3 (ARAP3) (Homo sapiens (Human)).